Consider the following 696-residue polypeptide: Spermatogenesis-associated protein 21 (696 aa).

Disordered stretches follow at residues 1–301 and 329–386; these read MDNR…AAGT and LKAR…SVPT. A compositionally biased stretch (basic and acidic residues) spans 67–86; that stretch reads KGPRYRDTFKEGPSELRTQE. Polar residues predominate over residues 96-116; the sequence is KQSSWVPQEGSQELQAGQDQS. The span at 195–209 shows a compositional bias: basic and acidic residues; sequence GDKRPKEADVPHIRP. Positions 223-235 are enriched in polar residues; that stretch reads DSSQEAMPPTSTV. Basic and acidic residues predominate over residues 275–287; that stretch reads EVRDIGERREPDR. Composition is skewed to low complexity over residues 288-297 and 339-366; these read VQQQPQKPVV and SPRT…SGPS. A coiled-coil region spans residues 424–451; sequence EPEEQSLQKLYQNREKSEEQLTLKQEEA. Residues 481–516 form the EF-hand domain; that stretch reads VTPAQVEDALMSADVNGDGHVDFKDFLAVMTDTRRF. Residues aspartate 494, asparagine 496, aspartate 498, histidine 500, and aspartate 505 each contribute to the Ca(2+) site. The disordered stretch occupies residues 646 to 696; the sequence is KPTNHYVQDQCTTPGLAPDIRSPFFQSRSQGNREHNSDSRKWPSSVPSRTH. The segment covering 676–686 has biased composition (basic and acidic residues); sequence GNREHNSDSRK.

In terms of biological role, involved in the differentiation of haploid spermatids. This chain is Spermatogenesis-associated protein 21 (SPATA21), found in Macaca fascicularis (Crab-eating macaque).